The chain runs to 565 residues: Salicyl-AMP ligase / salicyl-S-ArCP synthetase (565 aa).

Positions 214, 330, 352, 436, 451, and 542 each coordinate ATP.

The protein belongs to the ATP-dependent AMP-binding enzyme family.

It catalyses the reaction salicylate + ATP + H(+) = 2-hydroxybenzoyl-5'-AMP + diphosphate. The catalysed reaction is 2-hydroxybenzoyl-5'-AMP + holo-[ACP] = salicyl-[ACP] + AMP + H(+). Its pathway is siderophore biosynthesis; mycobactin biosynthesis. With respect to regulation, inhibited by salicyl-AMS, an acyl-AMP analog. Also inhibited by 5'-O-[(N-acyl)sulfamoyl]adenosines. Functionally, involved in the initial steps of the mycobactin biosynthetic pathway. Catalyzes the salicylation of the aryl carrier protein (ArCP) domain of MbtB through a two-step reaction. The first step is the ATP-dependent adenylation of salicylate to generate a salicyl-AMP intermediate. The second step is the transfer of this activated salicylate to MbtB to form a salicyl-ArCP domain thioester. This chain is Salicyl-AMP ligase / salicyl-S-ArCP synthetase, found in Mycobacterium tuberculosis (strain ATCC 25618 / H37Rv).